The primary structure comprises 440 residues: Chromosomal replication initiator protein DnaA (440 aa).

The domain I, interacts with DnaA modulators stretch occupies residues 1–74 (MNPSQILENL…VQSGNKAIIN (74 aa)). A domain II region spans residues 74–99 (NIQAQSAKQSNKSTKIDIAHIKAQST). Residues 100 to 316 (ILNPSFTFDS…GIIISLNAYA (217 aa)) are domain III, AAA+ region. ATP-binding residues include G146, G148, K149, and T150. A domain IV, binds dsDNA region spans residues 317–440 (TILGQEITLE…KNKILVKSQS (124 aa)).

This sequence belongs to the DnaA family. Oligomerizes as a right-handed, spiral filament on DNA at oriC.

It localises to the cytoplasm. Plays an essential role in the initiation and regulation of chromosomal replication. ATP-DnaA binds to the origin of replication (oriC) to initiate formation of the DNA replication initiation complex once per cell cycle. Binds the DnaA box (a 9 base pair repeat at the origin) and separates the double-stranded (ds)DNA. Forms a right-handed helical filament on oriC DNA; dsDNA binds to the exterior of the filament while single-stranded (ss)DNA is stabiized in the filament's interior. The ATP-DnaA-oriC complex binds and stabilizes one strand of the AT-rich DNA unwinding element (DUE), permitting loading of DNA polymerase. After initiation quickly degrades to an ADP-DnaA complex that is not apt for DNA replication. Binds acidic phospholipids. The protein is Chromosomal replication initiator protein DnaA of Campylobacter jejuni (strain RM1221).